The following is a 121-amino-acid chain: Ribosome-binding factor A (121 aa).

It belongs to the RbfA family. As to quaternary structure, monomer. Binds 30S ribosomal subunits, but not 50S ribosomal subunits or 70S ribosomes.

Its subcellular location is the cytoplasm. Its function is as follows. One of several proteins that assist in the late maturation steps of the functional core of the 30S ribosomal subunit. Associates with free 30S ribosomal subunits (but not with 30S subunits that are part of 70S ribosomes or polysomes). Required for efficient processing of 16S rRNA. May interact with the 5'-terminal helix region of 16S rRNA. This chain is Ribosome-binding factor A, found in Brevibacillus brevis (strain 47 / JCM 6285 / NBRC 100599).